The chain runs to 131 residues: Protein FAM107B (131 aa).

An N-acetylalanine modification is found at alanine 2. 2 disordered regions span residues methionine 39–serine 78 and lysine 100–serine 131. N6-acetyllysine is present on lysine 50. Over residues glutamate 52 to serine 78 the composition is skewed to basic and acidic residues. A coiled-coil region spans residues arginine 61–valine 112.

It belongs to the FAM107 family.

This Rattus norvegicus (Rat) protein is Protein FAM107B.